The sequence spans 350 residues: Small ribosomal subunit biogenesis GTPase RsgA (350 aa).

Positions 1-17 (MSKNKLSKGQQRRVQAN) are enriched in polar residues. The disordered stretch occupies residues 1–35 (MSKNKLSKGQQRRVQANHQRRLRTDRKPELDDSQL). Positions 103 to 273 (TSVLTRPDLY…VIDSPGVREF (171 aa)) constitute a CP-type G domain. GTP-binding positions include 159 to 162 (NKID) and 213 to 221 (GQSGVGKSS). Zn(2+) contacts are provided by Cys-297, Cys-302, His-304, and Cys-310.

It belongs to the TRAFAC class YlqF/YawG GTPase family. RsgA subfamily. As to quaternary structure, monomer. Associates with 30S ribosomal subunit, binds 16S rRNA. It depends on Zn(2+) as a cofactor.

Its subcellular location is the cytoplasm. One of several proteins that assist in the late maturation steps of the functional core of the 30S ribosomal subunit. Helps release RbfA from mature subunits. May play a role in the assembly of ribosomal proteins into the subunit. Circularly permuted GTPase that catalyzes slow GTP hydrolysis, GTPase activity is stimulated by the 30S ribosomal subunit. The protein is Small ribosomal subunit biogenesis GTPase RsgA of Yersinia pseudotuberculosis serotype O:1b (strain IP 31758).